The primary structure comprises 73 residues: uncharacterized protein (73 aa).

Residues 20–49 adopt a coiled-coil conformation; sequence NATYNKNLELEKRLAKIRNEIPNKSKLIAT.

This is an uncharacterized protein from Acheta domesticus (House cricket).